Reading from the N-terminus, the 186-residue chain is Acireductone dioxygenase (186 aa).

Fe(2+) is bound by residues His-103, His-105, Glu-109, and His-147. Residues His-103, His-105, Glu-109, and His-147 each coordinate Ni(2+).

It belongs to the acireductone dioxygenase (ARD) family. As to quaternary structure, monomer. Fe(2+) is required as a cofactor. Requires Ni(2+) as cofactor.

The catalysed reaction is 1,2-dihydroxy-5-(methylsulfanyl)pent-1-en-3-one + O2 = 3-(methylsulfanyl)propanoate + CO + formate + 2 H(+). The enzyme catalyses 1,2-dihydroxy-5-(methylsulfanyl)pent-1-en-3-one + O2 = 4-methylsulfanyl-2-oxobutanoate + formate + 2 H(+). It participates in amino-acid biosynthesis; L-methionine biosynthesis via salvage pathway; L-methionine from S-methyl-5-thio-alpha-D-ribose 1-phosphate: step 5/6. Its function is as follows. Catalyzes 2 different reactions between oxygen and the acireductone 1,2-dihydroxy-3-keto-5-methylthiopentene (DHK-MTPene) depending upon the metal bound in the active site. Fe-containing acireductone dioxygenase (Fe-ARD) produces formate and 2-keto-4-methylthiobutyrate (KMTB), the alpha-ketoacid precursor of methionine in the methionine recycle pathway. Ni-containing acireductone dioxygenase (Ni-ARD) produces methylthiopropionate, carbon monoxide and formate, and does not lie on the methionine recycle pathway. In Parasynechococcus marenigrum (strain WH8102), this protein is Acireductone dioxygenase.